We begin with the raw amino-acid sequence, 246 residues long: MNPLISDFQTPQQRTPVIVALDFANEKDTLGFVRNLDPTLCQIKIGKELFTATGRSLAESLINQGFKLFLDLKYHDIPHTVAQACKVAADMGVWMVDMHASGGRRMMEAAAEAVAGYGTKPLLIGVTVLTSMEQSDLAEIGLNIAPEEQVIRLAKLAQSSGLDGVVCSAQEAAPLRRELGQDFVLVTPGIRLDVAGNNDDQRRIMTPAEALAAGSTYLVMGRPVTQAANPLAVLREVNRVANLEAN.

Residues aspartate 22, lysine 44, 71–80 (DLKYHDIPHT), threonine 130, arginine 191, glutamine 201, glycine 221, and arginine 222 each bind substrate. Lysine 73 serves as the catalytic Proton donor.

Belongs to the OMP decarboxylase family. Type 1 subfamily. As to quaternary structure, homodimer.

It catalyses the reaction orotidine 5'-phosphate + H(+) = UMP + CO2. It functions in the pathway pyrimidine metabolism; UMP biosynthesis via de novo pathway; UMP from orotate: step 2/2. Its function is as follows. Catalyzes the decarboxylation of orotidine 5'-monophosphate (OMP) to uridine 5'-monophosphate (UMP). The sequence is that of Orotidine 5'-phosphate decarboxylase from Neisseria meningitidis serogroup C (strain 053442).